We begin with the raw amino-acid sequence, 242 residues long: Phosphoribosylaminoimidazole-succinocarboxamide synthase (242 aa).

The protein belongs to the SAICAR synthetase family.

The enzyme catalyses 5-amino-1-(5-phospho-D-ribosyl)imidazole-4-carboxylate + L-aspartate + ATP = (2S)-2-[5-amino-1-(5-phospho-beta-D-ribosyl)imidazole-4-carboxamido]succinate + ADP + phosphate + 2 H(+). Its pathway is purine metabolism; IMP biosynthesis via de novo pathway; 5-amino-1-(5-phospho-D-ribosyl)imidazole-4-carboxamide from 5-amino-1-(5-phospho-D-ribosyl)imidazole-4-carboxylate: step 1/2. This Prochlorococcus marinus (strain MIT 9303) protein is Phosphoribosylaminoimidazole-succinocarboxamide synthase.